The chain runs to 255 residues: Large ribosomal subunit protein uL4 (255 aa).

Belongs to the universal ribosomal protein uL4 family. As to quaternary structure, part of the 50S ribosomal subunit.

Its function is as follows. One of the primary rRNA binding proteins, this protein initially binds near the 5'-end of the 23S rRNA. It is important during the early stages of 50S assembly. It makes multiple contacts with different domains of the 23S rRNA in the assembled 50S subunit and ribosome. In terms of biological role, forms part of the polypeptide exit tunnel. The protein is Large ribosomal subunit protein uL4 of Pyrococcus abyssi (strain GE5 / Orsay).